The following is a 195-amino-acid chain: Probable GTP-binding protein EngB (195 aa).

Residues 22-195 (QLPEIALAGR…WSALSRYIKR (174 aa)) form the EngB-type G domain. Residues 30-37 (GRSNVGKS), 57-61 (GKTQT), 75-78 (DVPG), 142-145 (TKLD), and 174-176 (FSA) each bind GTP. S37 and T59 together coordinate Mg(2+).

Belongs to the TRAFAC class TrmE-Era-EngA-EngB-Septin-like GTPase superfamily. EngB GTPase family. Mg(2+) serves as cofactor.

Its function is as follows. Necessary for normal cell division and for the maintenance of normal septation. The polypeptide is Probable GTP-binding protein EngB (Oceanobacillus iheyensis (strain DSM 14371 / CIP 107618 / JCM 11309 / KCTC 3954 / HTE831)).